The primary structure comprises 280 residues: Putative transcription factor kapC (280 aa).

The interval 1–102 (MQPALAPHPS…GKRPLSTSKR (102 aa)) is disordered. Pro residues predominate over residues 39 to 49 (PQPPAPQPPHM). A compositionally biased stretch (polar residues) spans 79–89 (TQPDVTGQETP). The region spanning 96 to 159 (PLSTSKRAAQ…EYIINLQSRL (64 aa)) is the bZIP domain. The interval 97-120 (LSTSKRAAQNRAAQRAFRQRKEAH) is basic motif. Positions 124–155 (LEGKVKAYESMGEAIKALQAENYQLREYIINL) are leucine-zipper. The disordered stretch occupies residues 169-280 (LPGNIDLSQP…EQTHGLPLIS (112 aa)). Residues 197 to 206 (APPPTAPQQP) are compositionally biased toward pro residues.

The protein belongs to the bZIP family.

The protein localises to the nucleus. Its function is as follows. Putative transcription factor. This chain is Putative transcription factor kapC (kapC), found in Aspergillus fumigatus (strain ATCC MYA-4609 / CBS 101355 / FGSC A1100 / Af293) (Neosartorya fumigata).